The following is a 263-amino-acid chain: Eukaryotic translation initiation factor 3 subunit J-B (263 aa).

Residues 1–13 are compositionally biased toward low complexity; it reads MAAAAAAAAAAAA. The tract at residues 1–115 is disordered; the sequence is MAAAAAAAAA…EPEESKVLTP (115 aa). Alanine 2 is modified (N-acetylalanine). The interval 6 to 74 is sufficient for interaction with EIF3B; sequence AAAAAAAAGD…KEEAEVKPEV (69 aa). 3 positions are modified to phosphoserine: serine 16, serine 18, and serine 25. Acidic residues predominate over residues 45 to 66; that stretch reads EGEDEDEDVKDNWDDDDDENKE. Basic and acidic residues predominate over residues 67–111; that stretch reads EAEVKPEVKISEKKKIAEKIKEKERQQKKRQEEIKKRLEEPEESK. Residues 75 to 140 are a coiled coil; sequence KISEKKKIAE…ESDLELAKET (66 aa). Residue lysine 111 forms a Glycyl lysine isopeptide (Lys-Gly) (interchain with G-Cter in SUMO2) linkage. Threonine 114 is modified (phosphothreonine). Position 132 is a phosphoserine (serine 132). Residues 248 to 263 form a promotes stable association with the 40S ribosome region; it reads YGGYEGGYVQDYEDFM. Tyrosine 259 bears the Phosphotyrosine mark.

This sequence belongs to the eIF-3 subunit J family. As to quaternary structure, component of the eukaryotic translation initiation factor 3 (eIF-3) complex, which is composed of 13 subunits: EIF3A, EIF3B, EIF3C, EIF3D, EIF3E, EIF3F, EIF3G, EIF3H, EIF3I, EIF3J, EIF3K, EIF3L and EIF3M. The eIF-3 complex appears to include 3 stable modules: module A is composed of EIF3A, EIF3B, EIF3G and EIF3I; module B is composed of EIF3F, EIF3H, and EIF3M; and module C is composed of EIF3C, EIF3D, EIF3E, EIF3K and EIF3L. EIF3C of module C binds EIF3B of module A and EIF3H of module B, thereby linking the three modules. EIF3J is a labile subunit that binds to the eIF-3 complex via EIF3B. The eIF-3 complex interacts with RPS6KB1 under conditions of nutrient depletion. Mitogenic stimulation leads to binding and activation of a complex composed of MTOR and RPTOR, leading to phosphorylation and release of RPS6KB1 and binding of EIF4B to eIF-3. Post-translationally, phosphorylated. Phosphorylation is enhanced upon serum stimulation.

The protein localises to the cytoplasm. Component of the eukaryotic translation initiation factor 3 (eIF-3) complex, which is required for several steps in the initiation of protein synthesis. The eIF-3 complex associates with the 40S ribosome and facilitates the recruitment of eIF-1, eIF-1A, eIF-2:GTP:methionyl-tRNAi and eIF-5 to form the 43S pre-initiation complex (43S PIC). The eIF-3 complex stimulates mRNA recruitment to the 43S PIC and scanning of the mRNA for AUG recognition. The eIF-3 complex is also required for disassembly and recycling of post-termination ribosomal complexes and subsequently prevents premature joining of the 40S and 60S ribosomal subunits prior to initiation. The eIF-3 complex specifically targets and initiates translation of a subset of mRNAs involved in cell proliferation, including cell cycling, differentiation and apoptosis, and uses different modes of RNA stem-loop binding to exert either translational activation or repression. This subunit binds directly within the mRNA entry channel of the 40S ribosome to the aminoacyl (A) site. It may regulate the interaction between the 43S PIC and mRNA. The sequence is that of Eukaryotic translation initiation factor 3 subunit J-B (Eif3j2) from Mus musculus (Mouse).